The primary structure comprises 88 residues: Small ribosomal subunit protein bS16 (88 aa).

It belongs to the bacterial ribosomal protein bS16 family.

The chain is Small ribosomal subunit protein bS16 from Geotalea daltonii (strain DSM 22248 / JCM 15807 / FRC-32) (Geobacter daltonii).